Reading from the N-terminus, the 133-residue chain is DNA-directed RNA polymerases I and III subunit RPAC2 (133 aa).

At Met-1 the chain carries N-acetylmethionine.

It belongs to the archaeal Rpo11/eukaryotic RPB11/RPC19 RNA polymerase subunit family. As to quaternary structure, component of the RNA polymerase I and RNA polymerase III complexes consisting of at least 13 and 17 subunits, respectively. Pol I complex consists of a ten-subunit catalytic core composed of POLR1A/RPA1, POLR1B/RPA2, POLR1C/RPAC1, POLR1D/RPAC2, POLR1H/RPA12, POLR2E/RPABC1, POLR2F/RPABC2, POLR2H/RPABC3, POLR2K/RPABC4 and POLR2L/RPABC5; a mobile stalk subunit POLR1F/RPA43 protruding from the core and additional subunits homologous to general transcription factors POLR1E/RPA49 and POLR1G/RPA34. Part of Pol I pre-initiation complex (PIC), in which Pol I core assembles with RRN3 and promoter-bound UTBF and SL1/TIF-IB complex. Pol III complex consists of a ten-subunit catalytic core composed of POLR3A/RPC1, POLR3B/RPC2, POLR1C/RPAC1, POLR1D/RPAC2, POLR3K/RPC10, POLR2E/RPABC1, POLR2F/RPABC2, POLR2H/RPABC3, POLR2K/RPABC4 and POLR2L/RPABC5; a mobile stalk composed of two subunits POLR3H/RPC8 and CRCP/RPC9, protruding from the core and functioning primarily in transcription initiation; and additional subunits homologous to general transcription factors of the RNA polymerase II machinery, POLR3C/RPC3-POLR3F/RPC6-POLR3G/RPC7 heterotrimer required for transcription initiation and POLR3D/RPC4-POLR3E/RPC5 heterodimer involved in both transcription initiation and termination.

Its subcellular location is the nucleus. It localises to the nucleolus. Its function is as follows. DNA-dependent RNA polymerase catalyzes the transcription of DNA into RNA using the four ribonucleoside triphosphates as substrates. Common component of RNA polymerases I and III which synthesize ribosomal RNA precursors and short non-coding RNAs including 5S rRNA, snRNAs, tRNAs and miRNAs, respectively. The sequence is that of DNA-directed RNA polymerases I and III subunit RPAC2 from Homo sapiens (Human).